Here is a 263-residue protein sequence, read N- to C-terminus: H-2 class II histocompatibility antigen, A-U beta chain (263 aa).

Positions 1 to 27 (MALQIPSLLLLAAVVVLMVLSSPGTEG) are cleaved as a signal peptide. The interval 28–120 (GDSERHFVVQ…TEVPTSLRRL (93 aa)) is beta-1. The Extracellular portion of the chain corresponds to 28–224 (GDSERHFVVQ…RAQSESARSK (197 aa)). 2 disulfides stabilise this stretch: Cys42-Cys104 and Cys143-Cys199. N-linked (GlcNAc...) asparagine glycosylation is present at Asn46. Positions 121-214 (EQPNVVISLS…SLKSPITVEW (94 aa)) are beta-2. The Ig-like C1-type domain maps to 123–211 (PNVVISLSRT…EHPSLKSPIT (89 aa)). The tract at residues 215–224 (RAQSESARSK) is connecting peptide. The helical transmembrane segment at 225–245 (MLSGIGGCVLGVIFLGLGLFI) threads the bilayer. The Cytoplasmic portion of the chain corresponds to 246–263 (RHRSQKGPRGPPPAGLLQ).

It belongs to the MHC class II family.

It localises to the membrane. The protein is H-2 class II histocompatibility antigen, A-U beta chain of Mus musculus (Mouse).